Here is a 479-residue protein sequence, read N- to C-terminus: Ribulose bisphosphate carboxylase large chain (479 aa).

The propeptide occupies 1–2 (MS). Residue Pro3 is modified to N-acetylproline. N6,N6,N6-trimethyllysine is present on Lys14. Asn123 and Thr173 together coordinate substrate. Lys175 functions as the Proton acceptor in the catalytic mechanism. Lys177 lines the substrate pocket. Mg(2+)-binding residues include Lys201, Asp203, and Glu204. An N6-carboxylysine modification is found at Lys201. Residue His294 is the Proton acceptor of the active site. Residues Arg295, His327, and Ser379 each coordinate substrate.

Belongs to the RuBisCO large chain family. Type I subfamily. In terms of assembly, heterohexadecamer of 8 large chains and 8 small chains. Mg(2+) serves as cofactor.

It is found in the plastid. The protein localises to the chloroplast. The catalysed reaction is 2 (2R)-3-phosphoglycerate + 2 H(+) = D-ribulose 1,5-bisphosphate + CO2 + H2O. It carries out the reaction D-ribulose 1,5-bisphosphate + O2 = 2-phosphoglycolate + (2R)-3-phosphoglycerate + 2 H(+). Its function is as follows. RuBisCO catalyzes two reactions: the carboxylation of D-ribulose 1,5-bisphosphate, the primary event in carbon dioxide fixation, as well as the oxidative fragmentation of the pentose substrate in the photorespiration process. Both reactions occur simultaneously and in competition at the same active site. In Jasminum nudiflorum (Winter jasmine), this protein is Ribulose bisphosphate carboxylase large chain.